A 43-amino-acid polypeptide reads, in one-letter code: Protein PsbN 2 (43 aa).

The helical transmembrane segment at 4 to 24 (ATILGISIAAALVGITVLALY) threads the bilayer.

Belongs to the PsbN family.

The protein resides in the cellular thylakoid membrane. May play a role in photosystem I and II biogenesis. The sequence is that of Protein PsbN 2 from Microcystis aeruginosa (strain NIES-843 / IAM M-2473).